The following is a 356-amino-acid chain: Phospho-N-acetylmuramoyl-pentapeptide-transferase (356 aa).

A run of 10 helical transmembrane segments spans residues 25–45, 70–90, 93–113, 138–158, 164–184, 195–215, 232–252, 258–278, 284–304, and 333–353; these read TVAA…SIIS, GTPT…ALLW, LFNI…AIGF, FLVA…GLAL, YFIN…VGLG, GLAI…AYLS, VGEL…FLWF, AIFM…IVSV, IVLI…IIQV, and QIVV…LSTL.

It belongs to the glycosyltransferase 4 family. MraY subfamily. Mg(2+) is required as a cofactor.

It localises to the cell inner membrane. It carries out the reaction UDP-N-acetyl-alpha-D-muramoyl-L-alanyl-gamma-D-glutamyl-meso-2,6-diaminopimeloyl-D-alanyl-D-alanine + di-trans,octa-cis-undecaprenyl phosphate = di-trans,octa-cis-undecaprenyl diphospho-N-acetyl-alpha-D-muramoyl-L-alanyl-D-glutamyl-meso-2,6-diaminopimeloyl-D-alanyl-D-alanine + UMP. It functions in the pathway cell wall biogenesis; peptidoglycan biosynthesis. Catalyzes the initial step of the lipid cycle reactions in the biosynthesis of the cell wall peptidoglycan: transfers peptidoglycan precursor phospho-MurNAc-pentapeptide from UDP-MurNAc-pentapeptide onto the lipid carrier undecaprenyl phosphate, yielding undecaprenyl-pyrophosphoryl-MurNAc-pentapeptide, known as lipid I. This is Phospho-N-acetylmuramoyl-pentapeptide-transferase from Bartonella bacilliformis (strain ATCC 35685 / KC583 / Herrer 020/F12,63).